Reading from the N-terminus, the 313-residue chain is Ribosomal RNA small subunit methyltransferase H (313 aa).

S-adenosyl-L-methionine-binding positions include 35-37 (GGH), aspartate 55, phenylalanine 80, aspartate 102, and glutamine 109.

This sequence belongs to the methyltransferase superfamily. RsmH family.

Its subcellular location is the cytoplasm. The enzyme catalyses cytidine(1402) in 16S rRNA + S-adenosyl-L-methionine = N(4)-methylcytidine(1402) in 16S rRNA + S-adenosyl-L-homocysteine + H(+). Specifically methylates the N4 position of cytidine in position 1402 (C1402) of 16S rRNA. The protein is Ribosomal RNA small subunit methyltransferase H of Shewanella putrefaciens (strain CN-32 / ATCC BAA-453).